The primary structure comprises 289 residues: Rhodopsin (289 aa).

Residues 1-7 (YLVSPAA) lie on the Extracellular side of the membrane. The helical transmembrane segment at 8-32 (YAALGAYMFLLILVGFPVNFLTLYV) threads the bilayer. Topologically, residues 33-44 (TLDHKKLRTPLN) are cytoplasmic. The chain crosses the membrane as a helical span at residues 45 to 67 (YILLNLAVADLFMVLGGFTTTMY). Over 68-81 (TSMHGYFVLGRLGC) the chain is Extracellular. A disulfide bridge connects residues Cys-81 and Cys-158. The chain crosses the membrane as a helical span at residues 82–104 (NLEGFFATLGGEIALWSLVVLAI). The short motif at 105–107 (ERW) is the 'Ionic lock' involved in activated form stabilization element. Residues 105-123 (ERWIVVCKPISNFRFTEDH) lie on the Cytoplasmic side of the membrane. The chain crosses the membrane as a helical span at residues 124 to 144 (AIMGLAFSWVMALTCAVPPLV). At 145–173 (GWSRYIPEGMQCSCGVDYYTRAEGFNTES) the chain is on the extracellular side. The chain crosses the membrane as a helical span at residues 174-195 (FVLYMFTVHFLIPLSVIFFCYG). Residues 196 to 223 (RLLCAVKEAAAAQQESETTQRAEKEVSR) lie on the Cytoplasmic side of the membrane. A helical membrane pass occupies residues 224 to 245 (MVVLMVIGFLVCWLPYASVAWW). Topologically, residues 246–257 (IFCNQGSEFGPI) are extracellular. The chain crosses the membrane as a helical span at residues 258–279 (FMTLPAFFAKTSAIYNPLIYIC). N6-(retinylidene)lysine is present on Lys-267. Topologically, residues 280–289 (MNKQFRHCMI) are cytoplasmic.

Belongs to the G-protein coupled receptor 1 family. Opsin subfamily. Phosphorylated on some or all of the serine and threonine residues present in the C-terminal region. In terms of processing, contains one covalently linked retinal chromophore.

It is found in the membrane. The protein resides in the cell projection. Its subcellular location is the cilium. The protein localises to the photoreceptor outer segment. Photoreceptor required for image-forming vision at low light intensity. While most salt water fish species use retinal as chromophore, most freshwater fish use 3-dehydroretinal, or a mixture of retinal and 3-dehydroretinal. Light-induced isomerization of 11-cis to all-trans retinal triggers a conformational change that activates signaling via G-proteins. Subsequent receptor phosphorylation mediates displacement of the bound G-protein alpha subunit by arrestin and terminates signaling. This is Rhodopsin (rho) from Procottus jeittelesii (Red sculpin).